The chain runs to 147 residues: Hemoglobin subunit gamma (147 aa).

Residues 3 to 147 (NFTAEDKAAI…VASALASRYH (145 aa)) enclose the Globin domain. The heme b site is built by His-64 and His-93.

The protein belongs to the globin family. Heterotetramer of two alpha chains and two gamma chains in fetal hemoglobin (Hb F). As to expression, red blood cells.

Its function is as follows. Gamma chains make up the fetal hemoglobin F, in combination with alpha chains. This Callithrix jacchus (White-tufted-ear marmoset) protein is Hemoglobin subunit gamma (HBG1).